Here is a 461-residue protein sequence, read N- to C-terminus: Photosystem II CP43 reaction center protein (461 aa).

A propeptide spanning residues 1–2 is cleaved from the precursor; the sequence is ME. Thr-3 carries the post-translational modification N-acetylthreonine. Thr-3 carries the phosphothreonine modification. 5 consecutive transmembrane segments (helical) span residues 57–81, 122–143, 166–188, 243–263, and 279–300; these read LFEV…PHLA, LLGP…KDRN, KASY…RKIT, KPFA…LSYS, and WFNN…ASQA. Glu-355 contributes to the [CaMn4O5] cluster binding site. Residues 435 to 459 form a helical membrane-spanning segment; sequence RARAAAAGFEKGIDRDFEPVLSMTP.

This sequence belongs to the PsbB/PsbC family. PsbC subfamily. In terms of assembly, PSII is composed of 1 copy each of membrane proteins PsbA, PsbB, PsbC, PsbD, PsbE, PsbF, PsbH, PsbI, PsbJ, PsbK, PsbL, PsbM, PsbT, PsbX, PsbY, PsbZ, Psb30/Ycf12, at least 3 peripheral proteins of the oxygen-evolving complex and a large number of cofactors. It forms dimeric complexes. Binds multiple chlorophylls and provides some of the ligands for the Ca-4Mn-5O cluster of the oxygen-evolving complex. It may also provide a ligand for a Cl- that is required for oxygen evolution. PSII binds additional chlorophylls, carotenoids and specific lipids. is required as a cofactor.

The protein localises to the plastid. It is found in the chloroplast thylakoid membrane. In terms of biological role, one of the components of the core complex of photosystem II (PSII). It binds chlorophyll and helps catalyze the primary light-induced photochemical processes of PSII. PSII is a light-driven water:plastoquinone oxidoreductase, using light energy to abstract electrons from H(2)O, generating O(2) and a proton gradient subsequently used for ATP formation. This Lotus japonicus (Lotus corniculatus var. japonicus) protein is Photosystem II CP43 reaction center protein.